A 37-amino-acid polypeptide reads, in one-letter code: Large ribosomal subunit protein bL36c (37 aa).

This sequence belongs to the bacterial ribosomal protein bL36 family.

The protein resides in the plastid. Its subcellular location is the chloroplast. The polypeptide is Large ribosomal subunit protein bL36c (Oltmannsiellopsis viridis (Marine flagellate)).